Consider the following 428-residue polypeptide: GTPase Obg (428 aa).

In terms of domain architecture, Obg spans 1–158 (MFIDEVIITV…IKVKLELKLL (158 aa)). Positions 159–330 (ADVALVGYPS…ILYKTYDMLS (172 aa)) constitute an OBG-type G domain. Residues 165–172 (GYPSVGKS), 190–194 (FTTLE), 212–215 (DIPG), 282–285 (NKMD), and 311–313 (SVL) contribute to the GTP site. Residues Ser172 and Thr192 each coordinate Mg(2+). One can recognise an OCT domain in the interval 349–428 (ELKIEKEDFE…IADVEFEYFE (80 aa)).

Belongs to the TRAFAC class OBG-HflX-like GTPase superfamily. OBG GTPase family. As to quaternary structure, monomer. It depends on Mg(2+) as a cofactor.

It is found in the cytoplasm. An essential GTPase which binds GTP, GDP and possibly (p)ppGpp with moderate affinity, with high nucleotide exchange rates and a fairly low GTP hydrolysis rate. Plays a role in control of the cell cycle, stress response, ribosome biogenesis and in those bacteria that undergo differentiation, in morphogenesis control. The chain is GTPase Obg from Fusobacterium nucleatum subsp. nucleatum (strain ATCC 25586 / DSM 15643 / BCRC 10681 / CIP 101130 / JCM 8532 / KCTC 2640 / LMG 13131 / VPI 4355).